A 274-amino-acid chain; its full sequence is MQFSKMHGLGNDFMVVDAVTQNVYFSPELICRLADRHTGVGFDQLLIVEAPYDPDMDFHYRIFNADGSEVAQCGNGARCFARFVRLKGLINKRDIKVSTQSGRMVLSITNDDQVCVNMGEPEFEPHHVPFRALRAEKTYILRVAERTVLCGVVSMGNPHCVIQVPDVETAEVDILGPALESHERFPERANIGFMQILNRGHIRLRVYERGVGETQACGSGACAAVAVGIQQQLLDNHVRVDLPGGSLFICWDGPGKPLYMTGPAMHVYDGTIHL.

Substrate-binding residues include N11, Q44, and N64. The active-site Proton donor is the C73. Residues 74–75 (GN), N157, N190, and 208–209 (ER) each bind substrate. Catalysis depends on C217, which acts as the Proton acceptor. 218–219 (GS) serves as a coordination point for substrate.

This sequence belongs to the diaminopimelate epimerase family. Homodimer.

The protein resides in the cytoplasm. The catalysed reaction is (2S,6S)-2,6-diaminopimelate = meso-2,6-diaminopimelate. It functions in the pathway amino-acid biosynthesis; L-lysine biosynthesis via DAP pathway; DL-2,6-diaminopimelate from LL-2,6-diaminopimelate: step 1/1. Functionally, catalyzes the stereoinversion of LL-2,6-diaminopimelate (L,L-DAP) to meso-diaminopimelate (meso-DAP), a precursor of L-lysine and an essential component of the bacterial peptidoglycan. The protein is Diaminopimelate epimerase of Photorhabdus laumondii subsp. laumondii (strain DSM 15139 / CIP 105565 / TT01) (Photorhabdus luminescens subsp. laumondii).